The primary structure comprises 115 residues: Large ribosomal subunit protein bL19 (115 aa).

Belongs to the bacterial ribosomal protein bL19 family.

Functionally, this protein is located at the 30S-50S ribosomal subunit interface and may play a role in the structure and function of the aminoacyl-tRNA binding site. The chain is Large ribosomal subunit protein bL19 from Desulforamulus reducens (strain ATCC BAA-1160 / DSM 100696 / MI-1) (Desulfotomaculum reducens).